The primary structure comprises 148 residues: Protein GLUTAMINE DUMPER 3 (148 aa).

A disordered region spans residues 1 to 24 (MEGRQYYPPRENVEGNRTTMGGGP). Residues 1-34 (MEGRQYYPPRENVEGNRTTMGGGPHSPWHSPVPY) lie on the Extracellular side of the membrane. The chain crosses the membrane as a helical span at residues 35-55 (LFGGLAAMLGLIAFALLILAC). Over 56–148 (SYWRLSGYLD…RSSESNGETH (93 aa)) the chain is Cytoplasmic. The VIMAG signature appears at 99–103 (VIMAG). A compositionally biased stretch (acidic residues) spans 120–132 (CDDDDDEDDDVEG). Residues 120–148 (CDDDDDEDDDVEGSDQVVPRSSESNGETH) form a disordered region. The span at 138–148 (PRSSESNGETH) shows a compositional bias: polar residues.

The protein belongs to the GLUTAMINE DUMPER 1 (TC 9.B.60) family. Expressed in the vascular tissues. Also detected in anthers.

It is found in the membrane. Probable subunit of an amino acid transporter involved in the regulation of the amino acid metabolism. Stimulates amino acid export by activating nonselective amino acid facilitators. Acts upstream genes involved in the salicylic acid (SA) pathway and in the geminivirus-host interaction. The protein is Protein GLUTAMINE DUMPER 3 (GDU3) of Arabidopsis thaliana (Mouse-ear cress).